The following is a 361-amino-acid chain: Chorismate synthase (361 aa).

Arginine 48 and arginine 54 together coordinate NADP(+). Residues 131-133 (RSS), 243-244 (NA), glycine 287, 302-306 (KPTSS), and arginine 328 each bind FMN.

The protein belongs to the chorismate synthase family. Homotetramer. FMNH2 serves as cofactor.

The enzyme catalyses 5-O-(1-carboxyvinyl)-3-phosphoshikimate = chorismate + phosphate. It participates in metabolic intermediate biosynthesis; chorismate biosynthesis; chorismate from D-erythrose 4-phosphate and phosphoenolpyruvate: step 7/7. Its function is as follows. Catalyzes the anti-1,4-elimination of the C-3 phosphate and the C-6 proR hydrogen from 5-enolpyruvylshikimate-3-phosphate (EPSP) to yield chorismate, which is the branch point compound that serves as the starting substrate for the three terminal pathways of aromatic amino acid biosynthesis. This reaction introduces a second double bond into the aromatic ring system. The protein is Chorismate synthase of Rhodopseudomonas palustris (strain BisA53).